The primary structure comprises 358 residues: Chorismate synthase (358 aa).

NADP(+) is bound by residues arginine 46 and arginine 52. Residues 123-125 (RSS), 239-240 (NA), glycine 283, 298-302 (KSVAT), and arginine 324 each bind FMN.

Belongs to the chorismate synthase family. As to quaternary structure, homotetramer. It depends on FMNH2 as a cofactor.

It carries out the reaction 5-O-(1-carboxyvinyl)-3-phosphoshikimate = chorismate + phosphate. The protein operates within metabolic intermediate biosynthesis; chorismate biosynthesis; chorismate from D-erythrose 4-phosphate and phosphoenolpyruvate: step 7/7. Functionally, catalyzes the anti-1,4-elimination of the C-3 phosphate and the C-6 proR hydrogen from 5-enolpyruvylshikimate-3-phosphate (EPSP) to yield chorismate, which is the branch point compound that serves as the starting substrate for the three terminal pathways of aromatic amino acid biosynthesis. This reaction introduces a second double bond into the aromatic ring system. In Parabacteroides distasonis (strain ATCC 8503 / DSM 20701 / CIP 104284 / JCM 5825 / NCTC 11152), this protein is Chorismate synthase.